A 456-amino-acid chain; its full sequence is F-box/FBD/LRR-repeat protein At3g52680 (456 aa).

Residues 20-73 form the F-box domain; the sequence is KDRISELPDGLLLKILSSLPTNIVVATSVLSKQWRSLWKLVPNLEFDSDDYESE. LRR repeat units follow at residues 74–100, 102–127, 152–179, 180–205, 225–252, 270–295, and 318–344; these read HYTFSEIVCKSFLSHKAPVLESFRLKF, NFNPVDIGLWVGIAFSRHLRELVLDF, TLKLVLCILVDIPSPVLMKSLRTLHLEF, VRYKDESSVRNLLSGCPGLEELRLYR, TIHDNNDGPEFWGYVINAPFLKYLLIEE, IAEVTSITIEKFLGSFTSVSRLLLNL, and TREAEWWNLLTLMLENSPKLQVLKLTD. The FBD domain maps to 358–409; sequence KWNEPKDVPECLLSQLETFVWRRFDWGREEEKEIATYILKNGRRLKKATFST.

This Arabidopsis thaliana (Mouse-ear cress) protein is F-box/FBD/LRR-repeat protein At3g52680.